The chain runs to 305 residues: Acetaldehyde dehydrogenase (305 aa).

13–16 (SGNI) is an NAD(+) binding site. The Acyl-thioester intermediate role is filled by Cys128. NAD(+) contacts are provided by residues 159–167 (SAGPGTRQN) and Asn278.

This sequence belongs to the acetaldehyde dehydrogenase family.

The catalysed reaction is acetaldehyde + NAD(+) + CoA = acetyl-CoA + NADH + H(+). This chain is Acetaldehyde dehydrogenase, found in Chloroflexus aurantiacus (strain ATCC 29366 / DSM 635 / J-10-fl).